The chain runs to 152 residues: Transcriptional regulator MraZ (152 aa).

SpoVT-AbrB domains are found at residues 5-52 (ATLV…PLPE) and 81-124 (ASEC…DETT).

The protein belongs to the MraZ family. As to quaternary structure, forms oligomers.

Its subcellular location is the cytoplasm. It is found in the nucleoid. In terms of biological role, negatively regulates its own expression and that of the subsequent genes in the proximal part of the division and cell wall (dcw) gene cluster. Acts by binding directly to DNA. May also regulate the expression of genes outside the dcw cluster. The chain is Transcriptional regulator MraZ from Escherichia fergusonii (strain ATCC 35469 / DSM 13698 / CCUG 18766 / IAM 14443 / JCM 21226 / LMG 7866 / NBRC 102419 / NCTC 12128 / CDC 0568-73).